Here is a 359-residue protein sequence, read N- to C-terminus: Type-1 angiotensin II receptor (359 aa).

Over 1-25 (MVPNYSTEETVKRIHVDCPVSGRHS) the chain is Extracellular. A glycan (N-linked (GlcNAc...) asparagine) is linked at Asn-4. Asp-17 contributes to the angiotensin II binding site. Disulfide bonds link Cys-18–Cys-274 and Cys-101–Cys-180. Residues 26-55 (YIYIMVPTVYSIIFIIGIFGNSLVVIVIYC) traverse the membrane as a helical segment. Residues 56–61 (YMKLKT) are Cytoplasmic-facing. The chain crosses the membrane as a helical span at residues 62–89 (VASIFLLNLALADLCFLITLPLWAAYTA). Over 90-98 (MEYQWPFGN) the chain is Extracellular. The chain crosses the membrane as a helical span at residues 99–125 (CLCKLASAGISFNLYASVFLLTCLSID). At 126–141 (RYLAIVHPVKSRIRRT) the chain is on the cytoplasmic side. A helical transmembrane segment spans residues 142–165 (MFVARVTCIVIWLLAGVASLPVII). The Extracellular segment spans residues 166–190 (HRNIFFAENLNMTVCGFRYDNNNTT). Arg-167 lines the angiotensin II pocket. The N-linked (GlcNAc...) asparagine glycan is linked to Asn-176. Angiotensin II is bound by residues Phe-182 and Tyr-184. 2 N-linked (GlcNAc...) asparagine glycosylation sites follow: Asn-187 and Asn-188. Residues 191–216 (LRVGLGLSKNLLGFLIPFLIILTSYT) traverse the membrane as a helical segment. Position 199 (Lys-199) interacts with angiotensin II. The Cytoplasmic portion of the chain corresponds to 217–239 (LIWKTLKKAYQIQRNKTRNDDIF). Residues 240–268 (KMIVAIVFFFFFSWIPHQVFTFLDVLIQL) traverse the membrane as a helical segment. The Extracellular portion of the chain corresponds to 269-278 (HVITDCKITD). A helical transmembrane segment spans residues 279–304 (IVDTAMPFTICIAYFNNCLNPFFYVF). The Cytoplasmic portion of the chain corresponds to 305 to 359 (FGKNFKKYFLQLIKYIPPNVSTHPSLTTKMSSLSYRPPENIRLPTKKTAGSFDAE).

Belongs to the G-protein coupled receptor 1 family. Post-translationally, C-terminal Ser or Thr residues may be phosphorylated.

It is found in the cell membrane. In terms of biological role, receptor for angiotensin II, a vasoconstricting peptide, which acts as a key regulator of blood pressure and sodium retention by the kidney. The activated receptor in turn couples to G-alpha proteins G(q) (GNAQ, GNA11, GNA14 or GNA15) and thus activates phospholipase C and increases the cytosolic Ca(2+) concentrations, which in turn triggers cellular responses such as stimulation of protein kinase C. The chain is Type-1 angiotensin II receptor (AGTR1) from Gallus gallus (Chicken).